Reading from the N-terminus, the 372-residue chain is Glutamate 5-kinase (372 aa).

Residue Lys14 participates in ATP binding. Residues Ser54, Asp141, and Asn153 each coordinate substrate. 173-174 (TD) contributes to the ATP binding site. The 79-residue stretch at 280–358 (AGRIVLDQGA…TDILSILGFV (79 aa)) folds into the PUA domain.

This sequence belongs to the glutamate 5-kinase family.

Its subcellular location is the cytoplasm. It catalyses the reaction L-glutamate + ATP = L-glutamyl 5-phosphate + ADP. It participates in amino-acid biosynthesis; L-proline biosynthesis; L-glutamate 5-semialdehyde from L-glutamate: step 1/2. Catalyzes the transfer of a phosphate group to glutamate to form L-glutamate 5-phosphate. The sequence is that of Glutamate 5-kinase from Herminiimonas arsenicoxydans.